We begin with the raw amino-acid sequence, 585 residues long: A-type ATP synthase subunit A (585 aa).

Position 235–242 (235–242 (GPFGSGKT)) interacts with ATP.

The protein belongs to the ATPase alpha/beta chains family. Has multiple subunits with at least A(3), B(3), C, D, E, F, H, I and proteolipid K(x).

It is found in the cell membrane. The catalysed reaction is ATP + H2O + 4 H(+)(in) = ADP + phosphate + 5 H(+)(out). Its function is as follows. Component of the A-type ATP synthase that produces ATP from ADP in the presence of a proton gradient across the membrane. The A chain is the catalytic subunit. The sequence is that of A-type ATP synthase subunit A from Halobacterium salinarum (strain ATCC 29341 / DSM 671 / R1).